Reading from the N-terminus, the 264-residue chain is MNAIQIQDCGFWLIHVNQDIYFPDNNLPFGTAESLNLTHRNAARIGEWEGYPLFVVKEDPAEQREWTALRSLLRLPEEKFYLLNRGVELNYFLKTHRRCGKCGHQTEMARDEWAVQCQNDACGYRTYPVICPSIIVAVRRGKEILLANHTRHMPKNGGSGMYTTLAGFVEIGESFEQTVEREVFEETGLKVKNIRYFGSQPWAFPNSQMVGFLADYDSGEIRLQEDELNDARWFHCDQPLPELPPEGTIALKLINATLNICRQA.

Arg-70 contributes to the substrate binding site. Zn(2+)-binding residues include Cys-99 and Cys-102. Glu-112 lines the substrate pocket. Zn(2+) is bound by residues Cys-117 and Cys-122. Tyr-127 is a binding site for substrate. The Nudix hydrolase domain maps to 128–257; sequence PVICPSIIVA…TIALKLINAT (130 aa). The a divalent metal cation site is built by Ala-166, Glu-182, and Glu-186. Positions 167–188 match the Nudix box motif; sequence GFVEIGESFEQTVEREVFEETG. 200 to 207 is a substrate binding site; the sequence is QPWAFPNS. Glu-227 contributes to the a divalent metal cation binding site. Ala-250 contributes to the substrate binding site.

Belongs to the Nudix hydrolase family. NudC subfamily. In terms of assembly, homodimer. Requires Mg(2+) as cofactor. The cofactor is Mn(2+). Zn(2+) serves as cofactor.

The enzyme catalyses a 5'-end NAD(+)-phospho-ribonucleoside in mRNA + H2O = a 5'-end phospho-adenosine-phospho-ribonucleoside in mRNA + beta-nicotinamide D-ribonucleotide + 2 H(+). It catalyses the reaction NAD(+) + H2O = beta-nicotinamide D-ribonucleotide + AMP + 2 H(+). The catalysed reaction is NADH + H2O = reduced beta-nicotinamide D-ribonucleotide + AMP + 2 H(+). In terms of biological role, mRNA decapping enzyme that specifically removes the nicotinamide adenine dinucleotide (NAD) cap from a subset of mRNAs by hydrolyzing the diphosphate linkage to produce nicotinamide mononucleotide (NMN) and 5' monophosphate mRNA. The NAD-cap is present at the 5'-end of some mRNAs and stabilizes RNA against 5'-processing. Has preference for mRNAs with a 5'-end purine. Catalyzes the hydrolysis of a broad range of dinucleotide pyrophosphates. The polypeptide is NAD-capped RNA hydrolase NudC (Actinobacillus succinogenes (strain ATCC 55618 / DSM 22257 / CCUG 43843 / 130Z)).